A 393-amino-acid polypeptide reads, in one-letter code: Thermostable carboxypeptidase 1 (393 aa).

Positions 104, 109, and 245 each coordinate Zn(2+). Tyr302 (proton donor) is an active-site residue. Glu373 functions as the Nucleophile in the catalytic mechanism.

This sequence belongs to the peptidase M20 family. As to quaternary structure, homotetramer. Requires Zn(2+) as cofactor.

Its function is as follows. Can release basic, acidic, aromatic, and, to a lesser extent, aliphatic amino acids. In Saccharolobus solfataricus (strain ATCC 35092 / DSM 1617 / JCM 11322 / P2) (Sulfolobus solfataricus), this protein is Thermostable carboxypeptidase 1 (cpsA1).